A 352-amino-acid polypeptide reads, in one-letter code: Rhodopsin (352 aa).

Topologically, residues 1-36 (MNGTEGPDFYIPFSNKTGVVRSPFEYPQYYLAEPWK) are extracellular. 2 N-linked (GlcNAc...) asparagine glycosylation sites follow: Asn2 and Asn15. Residues 37–61 (YSALAAYMFMLIILGFPINFLTLYV) form a helical membrane-spanning segment. The Cytoplasmic portion of the chain corresponds to 62 to 73 (TVQHKKLRSPLN). The helical transmembrane segment at 74 to 96 (YILLNLAVADLFMVLGGFTTTLY) threads the bilayer. Over 97–110 (TSMNGYFVFGVTGC) the chain is Extracellular. Cys110 and Cys187 form a disulfide bridge. A helical transmembrane segment spans residues 111–133 (YFEGFFATLGGEVALWCLVVLAI). The short motif at 134–136 (ERY) is the 'Ionic lock' involved in activated form stabilization element. The Cytoplasmic segment spans residues 134–152 (ERYIVVCKPMSNFRFGENH). A helical transmembrane segment spans residues 153–173 (AIMGVVFTWIMALTCAAPPLV). The Extracellular segment spans residues 174-202 (GWSRYIPEGMQCSCGVDYYTLKPEVNNES). Residues 203 to 224 (FVIYMFVVHFAIPLAVIFFCYG) traverse the membrane as a helical segment. Over 225-252 (RLVCTVKEAAAQQQESATTQKAEKEVTR) the chain is Cytoplasmic. Residues 253–274 (MVIIMVVSFLICWVPYASVAFY) form a helical membrane-spanning segment. The Extracellular portion of the chain corresponds to 275–286 (IFSNQGSDFGPV). A helical membrane pass occupies residues 287-308 (FMTIPAFFAKSSAIYNPVIYIV). The residue at position 296 (Lys296) is an N6-(retinylidene)lysine. The Cytoplasmic portion of the chain corresponds to 309–352 (MNKQFRNCMITTLCCGKNPLGDDETATGSKTETSSVSTSQVSPA). Residues Cys322 and Cys323 are each lipidated (S-palmitoyl cysteine). A disordered region spans residues 332–352 (ETATGSKTETSSVSTSQVSPA). Low complexity predominate over residues 335–352 (TGSKTETSSVSTSQVSPA).

The protein belongs to the G-protein coupled receptor 1 family. Opsin subfamily. Post-translationally, contains one covalently linked retinal chromophore. Upon light absorption, the covalently bound 11-cis-retinal is converted to all-trans-retinal. After hydrolysis of the Schiff base and release of the covalently bound all-trans-retinal, active rhodopsin is regenerated by binding of a fresh molecule of 11-cis-retinal. In terms of tissue distribution, expressed in rod-shaped photoreceptor cells in the retina that mediate vision in dim ligh (at protein level).

It localises to the membrane. It is found in the cell projection. The protein localises to the cilium. Its subcellular location is the photoreceptor outer segment. Functionally, photoreceptor required for image-forming vision at low light intensity. Required for photoreceptor cell viability after birth. Light-induced isomerization of 11-cis to all-trans retinal triggers a conformational change that activates signaling via G-proteins. Subsequent receptor phosphorylation mediates displacement of the bound G-protein alpha subunit by arrestin and terminates signaling. This chain is Rhodopsin (RHO), found in Alligator mississippiensis (American alligator).